Reading from the N-terminus, the 212-residue chain is Riboflavin synthase (212 aa).

Lumazine-binding repeat units lie at residues 1 to 97 and 98 to 195; these read MFTG…VGGH and LVSG…VDSV. Residues 4–6, 48–50, 62–67, 101–103, Lys137, 146–148, and 160–165 each bind 2,4-dihydroxypteridine; these read GIV, CLT, DIVEET, GHI, SLT, and FLIPET.

In terms of assembly, homotrimer.

The catalysed reaction is 2 6,7-dimethyl-8-(1-D-ribityl)lumazine + H(+) = 5-amino-6-(D-ribitylamino)uracil + riboflavin. It participates in cofactor biosynthesis; riboflavin biosynthesis; riboflavin from 2-hydroxy-3-oxobutyl phosphate and 5-amino-6-(D-ribitylamino)uracil: step 2/2. Functionally, catalyzes the dismutation of two molecules of 6,7-dimethyl-8-ribityllumazine, resulting in the formation of riboflavin and 5-amino-6-(D-ribitylamino)uracil. The sequence is that of Riboflavin synthase (ribE) from Buchnera aphidicola subsp. Baizongia pistaciae (strain Bp).